Here is a 789-residue protein sequence, read N- to C-terminus: Leucine-rich repeat and fibronectin type-III domain-containing protein 2 (789 aa).

The N-terminal stretch at 1–20 (METLLGGLLAFGMAFAVVDA) is a signal peptide. Residues 21–52 (CPKYCVCQNLSESLGTLCPSKGLLFVPPDIDR) form the LRRNT domain. The Extracellular segment spans residues 21–534 (CPKYCVCQNL…MHSQILGGTM (514 aa)). N-linked (GlcNAc...) asparagine glycosylation is present at Asn29. LRR repeat units follow at residues 53–74 (RTVE…DFAN), 77–98 (GLVD…SFLD), 101–122 (SLRS…TLRG), 125–146 (NLQH…AFED), 150–171 (TLED…SVRR), 174–195 (NLHQ…TFAD), and 198–219 (KLAR…PIFA). In terms of domain architecture, LRRCT spans 242-288 (NPLHCNCELLWLRRLERDDDLETCGSPGGLKGRYFWHVREEEFVCEP). The Ig-like domain occupies 289–375 (PLITQHTHKL…GEATAMVEVS (87 aa)). Cys310 and Cys359 are oxidised to a cystine. Residues Asn332, Asn341, and Asn384 are each glycosylated (N-linked (GlcNAc...) asparagine). The tract at residues 383 to 424 (SNSTSRTAPPKSRLSDITGSSKTSRGGGGSGGGEPPKSPPER) is disordered. The segment covering 407–416 (RGGGGSGGGE) has biased composition (gly residues). One can recognise a Fibronectin type-III domain in the interval 421–518 (PPERAVLVSE…GCAQFFTKAD (98 aa)). Residues 535-555 (ILVIGGIIVATLLVFIVILMV) traverse the membrane as a helical segment. Residues 556 to 789 (RYKVCNHEAP…SSEWVMESTV (234 aa)) are Cytoplasmic-facing. 3 disordered regions span residues 577–602 (SQTN…PPKV), 619–654 (SDSS…PSLD), and 668–702 (QRKE…LGPP). A compositionally biased stretch (pro residues) spans 583–599 (QPPPPSSAPAGAPPQGP). A compositionally biased stretch (low complexity) spans 619–638 (SDSSSSSSLGSGEAAGLGRA). Residues 641–650 (RIPPSAPRPK) show a composition bias toward pro residues. A PDZ-binding motif is present at residues 786-789 (ESTV).

The protein belongs to the LRFN family. In terms of assembly, forms heteromeric complexes with LRFN1, LRFN3, LRFN4 and LRFN5. Can form homomeric complexes, but not across cell junctions. Directly interacts with 2 NMDA receptor subunits GRIN1 and GRIN2A. Interacts with DLG1, DLG2, DLG3 and DLG4. Post-translationally, glycosylated.

Its subcellular location is the membrane. The protein resides in the synapse. The protein localises to the postsynaptic cell membrane. Promotes neurite outgrowth in hippocampal neurons. Enhances the cell surface expression of 2 NMDA receptor subunits GRIN1 and GRIN2A. May play a role in redistributing DLG4 to the cell periphery. This chain is Leucine-rich repeat and fibronectin type-III domain-containing protein 2 (LRFN2), found in Homo sapiens (Human).